Reading from the N-terminus, the 427-residue chain is FAD-dependent monooxygenase OpS4 (427 aa).

The N-terminal stretch at 1–22 (MGSIREPLHLVVIGGGLAGLSA) is a signal peptide. Residue E37 participates in FAD binding. N-linked (GlcNAc...) asparagine glycosylation occurs at N54. FAD is bound by residues R112, D306, and A319.

It belongs to the paxM FAD-dependent monooxygenase family. FAD serves as cofactor.

It participates in secondary metabolite biosynthesis. In terms of biological role, FAD-dependent monooxygenase; part of the gene cluster that mediates the biosynthesis of the bibenzoquinone oosporein, a metabolite required for fungal virulence that acts by evading host immunity to facilitate fungal multiplication in insects. The non-reducing polyketide synthase OpS1 produces orsellinic acid by condensing acetyl-CoA with 3 malonyl-CoA units. Orsellinic acid is then hydroxylated to benzenetriol by the hydroxylase OpS4. The intermediate is oxidized either nonenzymatically to 5,5'-dideoxy-oosporein or enzymatically to benzenetetrol by the oxidoreductase OpS7. The latter is further dimerized to oosporein by the catalase OpS5. OpS6 probably functions en route for protecting cells against oxidative stress by scavenging any leaked free radical form of benzenetetrol by activating the thiol group of glutathione. The protein is FAD-dependent monooxygenase OpS4 of Beauveria bassiana (strain ARSEF 2860) (White muscardine disease fungus).